We begin with the raw amino-acid sequence, 124 residues long: Calvin cycle protein CP12-1, chloroplastic (124 aa).

A chloroplast-targeting transit peptide spans 1-47 (MTTIAAAGLNVATPRVVVRPVARVLGPVRLNYPWKFGSMKRMVVVKA). Cystine bridges form between cysteine 68–cysteine 77 and cysteine 110–cysteine 119. Residues 90 to 124 (AASHARDKKKAGGSDPLEEYCNDNPETDECRTYDN) are disordered. Residues 105–116 (PLEEYCNDNPET) are compositionally biased toward acidic residues.

It belongs to the CP12 family. In terms of assembly, monomer. Component of a complex that contains two dimers of PRK, two tetramers of GAPDH and CP12. CP12 associates with GAPDH, causing its conformation to change. This GAPDH/CP12 complex binds PRK to form a half-complex (one unit). This unit probably dimerizes due partially to interactions between the enzymes of each unit. In terms of processing, contains two disulfide bonds; only the oxidized protein, with two disulfide bonds, is active in complex formation. The C-terminal disulfide is involved in the interaction with GAPDH and the N-terminal disulfide mediates the binding of PRK with this binary complex. In terms of tissue distribution, mostly expressed in flowers, hypocotyl, cotyledons, leaves, stems, and flower stalks. Barely detectable in roots and siliques. Present in root tips and lateral roots. Accumulates in the cotyledons of etiolated seedlings.

It localises to the plastid. It is found in the chloroplast. Functionally, acts as a linker essential in the assembly of a core complex of PRK/GAPDH. Coordinates the reversible inactivation of chloroplast enzymes GAPDH and PRK during darkness in photosynthetic tissues. This chain is Calvin cycle protein CP12-1, chloroplastic (CP12-1), found in Arabidopsis thaliana (Mouse-ear cress).